Consider the following 574-residue polypeptide: Sulfate adenylyltransferase (574 aa).

The interval 1–169 is N-terminal; that stretch reads MANTPHGGVL…IEAVNKLNHY (169 aa). Positions 170–394 are catalytic; it reads DYVALRYTPA…LRESNPPRAS (225 aa). Residue Q197 coordinates sulfate. ATP is bound by residues 197-200 and 291-294; these read QTRN and GRDH. Active-site residues include T198, R199, and N200. R199 contacts sulfate. A295 contributes to the sulfate binding site. V333 is an ATP binding site. Residues 395-574 form an allosteric regulation domain; adenylyl-sulfate kinase-like region; the sequence is QGFTIFLTGY…LESEGYFERL (180 aa). 3'-phosphoadenylyl sulfate is bound by residues 434–437, R451, 477–478, and R516; these read DTVR and IA.

It in the N-terminal section; belongs to the sulfate adenylyltransferase family. In the C-terminal section; belongs to the APS kinase family. As to quaternary structure, homohexamer. Dimer of trimers.

The protein resides in the cytoplasm. The enzyme catalyses sulfate + ATP + H(+) = adenosine 5'-phosphosulfate + diphosphate. The protein operates within sulfur metabolism; hydrogen sulfide biosynthesis; sulfite from sulfate: step 1/3. Its activity is regulated as follows. Allosterically inhibited by 3'-phosphoadenosine 5'-phosphosulfate (PAPS). Its function is as follows. Catalyzes the first intracellular reaction of sulfate assimilation, forming adenosine-5'-phosphosulfate (APS) from inorganic sulfate and ATP. Plays an important role in sulfate activation as a component of the biosynthesis pathway of sulfur-containing amino acids. The sequence is that of Sulfate adenylyltransferase from Aspergillus niger.